Consider the following 152-residue polypeptide: Superoxide dismutase [Cu-Zn] (152 aa).

Cu cation-binding residues include histidine 45, histidine 47, and histidine 62. Residues cysteine 56 and cysteine 145 are joined by a disulfide bond. Residues histidine 62, histidine 70, histidine 79, and aspartate 82 each contribute to the Zn(2+) site. Histidine 119 provides a ligand contact to Cu cation.

This sequence belongs to the Cu-Zn superoxide dismutase family. In terms of assembly, homodimer. The cofactor is Cu cation. Requires Zn(2+) as cofactor.

The protein localises to the cytoplasm. The enzyme catalyses 2 superoxide + 2 H(+) = H2O2 + O2. Its function is as follows. Destroys radicals which are normally produced within the cells and which are toxic to biological systems. This chain is Superoxide dismutase [Cu-Zn] (SODCC), found in Panax ginseng (Korean ginseng).